A 95-amino-acid polypeptide reads, in one-letter code: Acylphosphatase (95 aa).

An Acylphosphatase-like domain is found at 8 to 95 (RAKILVRGKV…GNFRTFEIKK (88 aa)). Residues Arg-23 and Asn-41 contribute to the active site.

This sequence belongs to the acylphosphatase family.

The catalysed reaction is an acyl phosphate + H2O = a carboxylate + phosphate + H(+). The sequence is that of Acylphosphatase (acyP) from Leptospira interrogans serogroup Icterohaemorrhagiae serovar copenhageni (strain Fiocruz L1-130).